The chain runs to 430 residues: GTPase Obg (430 aa).

In terms of domain architecture, Obg spans Met1–Leu158. The tract at residues Arg118–Pro145 is disordered. Residues Ala159–Glu329 enclose the OBG-type G domain. GTP contacts are provided by residues Gly165–Ser172, Phe190–Lys194, Asp212–Gly215, Asn282–Asp285, and Ser310–Ile312. Residues Ser172 and Thr192 each contribute to the Mg(2+) site. The 79-residue stretch at Lys352–Glu430 folds into the OCT domain.

This sequence belongs to the TRAFAC class OBG-HflX-like GTPase superfamily. OBG GTPase family. In terms of assembly, monomer. Mg(2+) is required as a cofactor.

It is found in the cytoplasm. In terms of biological role, an essential GTPase which binds GTP, GDP and possibly (p)ppGpp with moderate affinity, with high nucleotide exchange rates and a fairly low GTP hydrolysis rate. Plays a role in control of the cell cycle, stress response, ribosome biogenesis and in those bacteria that undergo differentiation, in morphogenesis control. The chain is GTPase Obg from Staphylococcus epidermidis (strain ATCC 12228 / FDA PCI 1200).